A 479-amino-acid chain; its full sequence is Ribosomal RNA small subunit methyltransferase F (479 aa).

S-adenosyl-L-methionine is bound by residues 125–131 (AAAPGSK), glutamate 149, aspartate 176, and aspartate 194. Cysteine 247 (nucleophile) is an active-site residue.

Belongs to the class I-like SAM-binding methyltransferase superfamily. RsmB/NOP family.

It localises to the cytoplasm. The catalysed reaction is cytidine(1407) in 16S rRNA + S-adenosyl-L-methionine = 5-methylcytidine(1407) in 16S rRNA + S-adenosyl-L-homocysteine + H(+). Specifically methylates the cytosine at position 1407 (m5C1407) of 16S rRNA. The chain is Ribosomal RNA small subunit methyltransferase F from Escherichia coli O17:K52:H18 (strain UMN026 / ExPEC).